We begin with the raw amino-acid sequence, 296 residues long: GTPase Era (296 aa).

Residues 7 to 174 (RTGFVAIVGR…LEEIAQRLPE (168 aa)) enclose the Era-type G domain. The segment at 15–22 (GRPNVGKS) is G1. 15–22 (GRPNVGKS) provides a ligand contact to GTP. Residues 41 to 45 (QTTRH) are G2. The G3 stretch occupies residues 62–65 (DTPG). GTP is bound by residues 62–66 (DTPGF) and 123–126 (SKID). The interval 123–126 (SKID) is G4. Residues 153–155 (VSA) form a G5 region. The region spanning 197–281 (VREKIFRLVG…HLEVYIKVRK (85 aa)) is the KH type-2 domain.

Belongs to the TRAFAC class TrmE-Era-EngA-EngB-Septin-like GTPase superfamily. Era GTPase family. In terms of assembly, monomer.

The protein localises to the cytoplasm. It localises to the cell inner membrane. An essential GTPase that binds both GDP and GTP, with rapid nucleotide exchange. Plays a role in 16S rRNA processing and 30S ribosomal subunit biogenesis and possibly also in cell cycle regulation and energy metabolism. This chain is GTPase Era, found in Bordetella avium (strain 197N).